The primary structure comprises 897 residues: N-terminal acetyltransferase A complex auxiliary subunit NAA15 (897 aa).

TPR repeat units follow at residues H77–N110, L111–H144, T189–K222, L223–N256, S298–P331, L380–V413, and Q488–I523. Disordered stretches follow at residues K578–G640 and S863–T897. Residues K602–E617 are compositionally biased toward basic and acidic residues. Positions S863–T872 are enriched in polar residues.

In terms of assembly, part of the NatA complex. Associates with ribosomes. Interacts with NAA10. As to expression, expressed in leaves, roots, shoots and flowers.

Auxiliary subunit of the NatA N-alpha-acetyltransferase complex. Required for male gametocyte development, embryogenesis, suspensor development and the formation of the quiescent center (QC) in the root meristem. Involved in plant immunity through the regulation of SNC1 stability. Required for embryo development. In Arabidopsis thaliana (Mouse-ear cress), this protein is N-terminal acetyltransferase A complex auxiliary subunit NAA15.